The primary structure comprises 454 residues: Histidine--tRNA ligase (454 aa).

Belongs to the class-II aminoacyl-tRNA synthetase family. As to quaternary structure, homodimer.

It localises to the cytoplasm. It carries out the reaction tRNA(His) + L-histidine + ATP = L-histidyl-tRNA(His) + AMP + diphosphate + H(+). The sequence is that of Histidine--tRNA ligase from Bacteroides fragilis (strain YCH46).